The chain runs to 164 residues: MTTFLGNPVTFTGKQLQVGDIAKDFLLIATDLSQKSLKDFEGKKKVISVVPSIDTGICSKQTRTFNEELSELDNTVVITVSMDLPFAQKRWCSAEGLDNVILLSDFYDHSFGQEYALLMNEWHLLTRAVLILDEHNKVTYTEYVDNVNSDVDYEAAINAAKILP.

Residues 16–162 (LQVGDIAKDF…YEAAINAAKI (147 aa)) enclose the Thioredoxin domain. Residue C58 is the Cysteine sulfenic acid (-SOH) intermediate of the active site. C58 and C92 are disulfide-bonded.

It belongs to the peroxiredoxin family. Tpx subfamily. Homodimer.

It catalyses the reaction a hydroperoxide + [thioredoxin]-dithiol = an alcohol + [thioredoxin]-disulfide + H2O. In terms of biological role, thiol-specific peroxidase that catalyzes the reduction of hydrogen peroxide and organic hydroperoxides to water and alcohols, respectively. Plays a role in cell protection against oxidative stress by detoxifying peroxides. The polypeptide is Thiol peroxidase (Streptococcus agalactiae serotype V (strain ATCC BAA-611 / 2603 V/R)).